A 54-amino-acid polypeptide reads, in one-letter code: SPbeta prophage-derived uncharacterized protein YoqE (54 aa).

This Bacillus subtilis (strain 168) protein is SPbeta prophage-derived uncharacterized protein YoqE (yoqE).